The primary structure comprises 506 residues: UDP-N-acetylmuramoyl-L-alanyl-D-glutamate--2,6-diaminopimelate ligase (506 aa).

Residue S42 coordinates UDP-N-acetyl-alpha-D-muramoyl-L-alanyl-D-glutamate. 125–131 is a binding site for ATP; sequence GTSGKTT. UDP-N-acetyl-alpha-D-muramoyl-L-alanyl-D-glutamate is bound by residues 166–167, S193, and R201; that span reads TT. Residue K233 is modified to N6-carboxylysine. Meso-2,6-diaminopimelate-binding positions include R395, 419-422, G475, and E479; that span reads DNPR. The Meso-diaminopimelate recognition motif motif lies at 419-422; sequence DNPR.

It belongs to the MurCDEF family. MurE subfamily. Requires Mg(2+) as cofactor. Post-translationally, carboxylation is probably crucial for Mg(2+) binding and, consequently, for the gamma-phosphate positioning of ATP.

The protein resides in the cytoplasm. The catalysed reaction is UDP-N-acetyl-alpha-D-muramoyl-L-alanyl-D-glutamate + meso-2,6-diaminopimelate + ATP = UDP-N-acetyl-alpha-D-muramoyl-L-alanyl-gamma-D-glutamyl-meso-2,6-diaminopimelate + ADP + phosphate + H(+). It participates in cell wall biogenesis; peptidoglycan biosynthesis. In terms of biological role, catalyzes the addition of meso-diaminopimelic acid to the nucleotide precursor UDP-N-acetylmuramoyl-L-alanyl-D-glutamate (UMAG) in the biosynthesis of bacterial cell-wall peptidoglycan. The protein is UDP-N-acetylmuramoyl-L-alanyl-D-glutamate--2,6-diaminopimelate ligase of Streptomyces coelicolor (strain ATCC BAA-471 / A3(2) / M145).